Reading from the N-terminus, the 423-residue chain is Glutamate-1-semialdehyde 2,1-aminomutase (423 aa).

The residue at position 266 (lysine 266) is an N6-(pyridoxal phosphate)lysine.

The protein belongs to the class-III pyridoxal-phosphate-dependent aminotransferase family. HemL subfamily. As to quaternary structure, homodimer. Pyridoxal 5'-phosphate serves as cofactor.

Its subcellular location is the cytoplasm. The enzyme catalyses (S)-4-amino-5-oxopentanoate = 5-aminolevulinate. It functions in the pathway porphyrin-containing compound metabolism; protoporphyrin-IX biosynthesis; 5-aminolevulinate from L-glutamyl-tRNA(Glu): step 2/2. In Nitratidesulfovibrio vulgaris (strain DP4) (Desulfovibrio vulgaris), this protein is Glutamate-1-semialdehyde 2,1-aminomutase.